Consider the following 206-residue polypeptide: Proteasome subunit beta 2 (206 aa).

Positions 1 to 7 (MREAVSK) are cleaved as a propeptide — removed in mature form; by autocatalysis. Thr-8 functions as the Nucleophile in the catalytic mechanism.

It belongs to the peptidase T1B family. The 20S proteasome core is composed of 14 alpha and 14 beta subunits that assemble into four stacked heptameric rings, resulting in a barrel-shaped structure. The two inner rings, each composed of seven catalytic beta subunits, are sandwiched by two outer rings, each composed of seven alpha subunits. The catalytic chamber with the active sites is on the inside of the barrel. Has a gated structure, the ends of the cylinder being occluded by the N-termini of the alpha-subunits. Is capped at one or both ends by the proteasome regulatory ATPase, PAN.

It is found in the cytoplasm. The catalysed reaction is Cleavage of peptide bonds with very broad specificity.. The formation of the proteasomal ATPase PAN-20S proteasome complex, via the docking of the C-termini of PAN into the intersubunit pockets in the alpha-rings, triggers opening of the gate for substrate entry. Interconversion between the open-gate and close-gate conformations leads to a dynamic regulation of the 20S proteasome proteolysis activity. Its function is as follows. Component of the proteasome core, a large protease complex with broad specificity involved in protein degradation. The chain is Proteasome subunit beta 2 from Desulfurococcus amylolyticus (strain DSM 18924 / JCM 16383 / VKM B-2413 / 1221n) (Desulfurococcus kamchatkensis).